Reading from the N-terminus, the 77-residue chain is uncharacterized protein (77 aa).

Residues 49–71 traverse the membrane as a helical segment; that stretch reads LVIASLILAIILLGILYYISYQM.

It is found in the membrane. This is an uncharacterized protein from Archaeoglobus fulgidus (strain ATCC 49558 / DSM 4304 / JCM 9628 / NBRC 100126 / VC-16).